A 486-amino-acid polypeptide reads, in one-letter code: Cardiolipin synthase A (486 aa).

2 consecutive transmembrane segments (helical) span residues 3–23 (TVYT…IAGV) and 38–58 (MAWL…YLAV). PLD phosphodiesterase domains follow at residues 219–246 (MDLR…VDPR) and 399–426 (EGGL…DMRS). Active-site residues include histidine 224, lysine 226, aspartate 231, histidine 404, lysine 406, and aspartate 411.

This sequence belongs to the phospholipase D family. Cardiolipin synthase subfamily. ClsA sub-subfamily.

The protein resides in the cell inner membrane. It catalyses the reaction 2 a 1,2-diacyl-sn-glycero-3-phospho-(1'-sn-glycerol) = a cardiolipin + glycerol. Functionally, catalyzes the reversible phosphatidyl group transfer from one phosphatidylglycerol molecule to another to form cardiolipin (CL) (diphosphatidylglycerol) and glycerol. In Escherichia coli O7:K1 (strain IAI39 / ExPEC), this protein is Cardiolipin synthase A.